A 163-amino-acid chain; its full sequence is Neurotrophin-3 (163 aa).

A signal peptide spans 1 to 3 (IQS). Positions 4–119 (TSMDQGILTE…VLNRTSRRKR (116 aa)) are excised as a propeptide. N-linked (GlcNAc...) asparagine glycosylation is present at Asn-112.

It belongs to the NGF-beta family.

Its subcellular location is the secreted. Its function is as follows. Seems to promote the survival of visceral and proprioceptive sensory neurons. This chain is Neurotrophin-3 (NTF3), found in Eryx conicus (Rough-scaled sand boa).